Reading from the N-terminus, the 56-residue chain is UPF0339 protein NMA1193/NMA1859 (56 aa).

The protein belongs to the UPF0339 family.

This is UPF0339 protein NMA1193/NMA1859 from Neisseria meningitidis serogroup A / serotype 4A (strain DSM 15465 / Z2491).